A 107-amino-acid polypeptide reads, in one-letter code: Ferredoxin (107 aa).

4Fe-4S ferredoxin-type domains lie at 8–37 (ERVVIDQDICISCGACVAACPYQALELDEN) and 38–67 (GKSRLIWEKCKDDFSCVAVCPVKAISKASE). [4Fe-4S] cluster contacts are provided by Cys-17, Cys-20, and Cys-23. 3 residues coordinate [3Fe-4S] cluster: Cys-27, Cys-47, and Cys-53. Cys-57 lines the [4Fe-4S] cluster pocket.

In terms of assembly, monomer. The cofactor is [4Fe-4S] cluster. [3Fe-4S] cluster is required as a cofactor. Post-translationally, the N-terminus is blocked.

In terms of biological role, ferredoxins are iron-sulfur proteins that transfer electrons in a wide variety of metabolic reactions. The sequence is that of Ferredoxin from Pyrobaculum islandicum (strain DSM 4184 / JCM 9189 / GEO3).